Here is a 185-residue protein sequence, read N- to C-terminus: PXMP2/4 family protein 4 (185 aa).

The next 3 helical transmembrane spans lie at 63–83 (MAVF…KYLD), 100–120 (IDQV…MGIL), and 141–161 (VSDC…ISSI).

It belongs to the peroxisomal membrane protein PXMP2/4 family.

It localises to the membrane. This Dictyostelium discoideum (Social amoeba) protein is PXMP2/4 family protein 4.